A 485-amino-acid chain; its full sequence is Arginine biosynthesis bifunctional protein ArgJ, mitochondrial (485 aa).

The substrate site is built by Thr-185, Lys-214, Thr-225, and Glu-315. The active-site Nucleophile is Thr-225.

Belongs to the ArgJ family. As to quaternary structure, heterodimer of an alpha and a beta chain. The alpha and beta chains are autoproteolytically processed from a single precursor protein within the mitochondrion.

It localises to the mitochondrion matrix. It catalyses the reaction N(2)-acetyl-L-ornithine + L-glutamate = N-acetyl-L-glutamate + L-ornithine. The enzyme catalyses L-glutamate + acetyl-CoA = N-acetyl-L-glutamate + CoA + H(+). It participates in amino-acid biosynthesis; L-arginine biosynthesis; L-ornithine and N-acetyl-L-glutamate from L-glutamate and N(2)-acetyl-L-ornithine (cyclic): step 1/1. The protein operates within amino-acid biosynthesis; L-arginine biosynthesis; N(2)-acetyl-L-ornithine from L-glutamate: step 1/4. Catalyzes two activities which are involved in the cyclic version of arginine biosynthesis: the synthesis of acetylglutamate from glutamate and acetyl-CoA, and of ornithine by transacetylation between acetylornithine and glutamate. The chain is Arginine biosynthesis bifunctional protein ArgJ, mitochondrial from Penicillium rubens (strain ATCC 28089 / DSM 1075 / NRRL 1951 / Wisconsin 54-1255) (Penicillium chrysogenum).